A 451-amino-acid chain; its full sequence is MASFHSSLLTALCTLCTYGILTMPAYGLDPNHPKHHYHKYSERLKRSNAEDSAFYLSSASESSEDLRQEPRRHILTPVRNVLKDDPCDEGLSISKLLHSIEKETNSQISVDFTILPQWFYPKKSALATSEEKQPTWQFYVSPNISWQLYNSPTAGVGSIDFSYTLIRYWNNSAQNANNAIGIAGEINDYSSRTNTLSLLTFSQTFPGEMLTVSFGQYSLYSIDGTLYDNDQQCGFLSYALSQNASATYSSGSVGAYVQFTPIPSINIQAGFQDAYSIVGSSFDVYNLTKNRYNFYGYFSWAPQSCLGAGQYSALIYSTRNVPQQPVQTTGWSLNFGQYLGEKLYVFGRWNGSTGTAVNLNRSHVLGLASANPINRNPKDLLGAACSMSKVNPKVVTDKKIRKYETVIETFATVGFGPHLSLSPDLQVYIHPARRPDRRSATVYSIRANFFV.

A signal peptide spans 1–27 (MASFHSSLLTALCTLCTYGILTMPAYG).

The protein belongs to the OprB family.

The protein localises to the cell outer membrane. Its function is as follows. Facilitates L-arginine uptake, as part of the AaxABC system. The arginine uptake by the bacterium in the macrophage may be a virulence factor against the host innate immune response. The polypeptide is Porin AaxA (aaxA) (Chlamydia caviae (strain ATCC VR-813 / DSM 19441 / 03DC25 / GPIC) (Chlamydophila caviae)).